We begin with the raw amino-acid sequence, 283 residues long: Circadian clock oscillator protein KaiA (283 aa).

Residues 1–146 (MAQSTALTIC…LFRLPALKES (146 aa)) form a psR domain, not required to form KaiA:KaiB:KaiC complex, or for a full KaiC phosphorylation cycle region. The 161-residue stretch at 3–163 (QSTALTICGL…RLSQKLKERL (161 aa)) folds into the KaiA N-terminal domain. The flexible linker stretch occupies residues 164–172 (GYLGVYYKR). The KaiA C-terminal domain occupies 173 to 281 (DTAFFFRRMS…CEMYRRSIPR (109 aa)).

Belongs to the KaiA family. As to quaternary structure, homodimer. The KaiABC complex composition changes during the circadian cycle to control KaiC phosphorylation. Complexes KaiC(6), KaiA(2-4):KaiC(6), KaiB(6):KaiC(6) and KaiC(6):KaiB(6):KaiA(12) are among the most important forms, many form cooperatively. Binds to KaiB and KaiC, the N-terminus (pseudoreceiver domain PsR) is not required for either interaction. 1 KaiB binds to one subunit of the KaiA homodimer. KaiA and CikA bind to the same region of the KaiB(fs) form and therefore compete.

Key component of the KaiABC oscillator complex, which constitutes the main circadian regulator in cyanobacteria. Complex composition changes during the circadian cycle to control KaiC phosphorylation. KaiA stimulates KaiC autophosphorylation, while KaiB sequesters KaiA, leading to KaiC autodephosphorylation. KaiA binding to the KaiC CII domain during the subjective day yields KaiA(2-4):KaiC(6) complexes which stimulate KaiC autophosphorylation. Phospho-Ser-431 KaiC accumulation triggers binding of KaiB during the subjective night to form the KaiB(6):KaiC(6) complex, leading to changes in the output regulators CikA and SasA. KaiB(6):KaiC(6) formation exposes a site for KaiA binding on KaiB that sequesters KaiA from KaiC's CII domain, making the KaiC(6):KaiB(6):KaiA(12) complex resulting in KaiC autodephosphorylation. Complete dephosphorylation of KaiC leads to dissociation of KaiA(2):KaiB(1), completing 1 cycle of the Kai oscillator. Formation of the KaiB:KaiC complex is promoted by KaiA, helping switch KaiC from its autophosphorylation to autodephosphatase function. Functionally, binds oxidized quinones via the N-terminal PsR domain, allowing it to sense redox changes and possibly mediate clock input. The protein is Circadian clock oscillator protein KaiA of Thermosynechococcus vestitus (strain NIES-2133 / IAM M-273 / BP-1).